Here is a 267-residue protein sequence, read N- to C-terminus: Dolichol-phosphate mannosyltransferase (267 aa).

Position 2 is an N-acetylserine (S2). Residues 2–238 (SIEYSVIVPA…QQLKELYVFK (237 aa)) are Cytoplasmic-facing. 10 residues coordinate GDP-alpha-D-mannose: P10, Y12, E14, V42, D44, D95, A96, D97, Q99, and R122. Residues D97 and Q99 each coordinate Mg(2+). 2 residues coordinate Mn(2+): D97 and Q99. Phosphoserine; by PKA is present on S141. Residues K183, R212, and K218 each contribute to the GDP-alpha-D-mannose site. Residues 239 to 259 (FGANNLILFITFWSILFFYVC) traverse the membrane as a helical; Anchor for type IV membrane protein segment. Over 260-267 (YQLYHLVF) the chain is Lumenal.

The protein belongs to the glycosyltransferase 2 family. As to quaternary structure, interacts with the C-terminus of SAC1, thereby sequestering it to the endoplasmic reticulum in exponentially growing cells. Under nutrient limitation conditions, this interaction is rapidly abolished. Mg(2+) is required as a cofactor. It depends on Mn(2+) as a cofactor. Requires Ca(2+) as cofactor.

It is found in the endoplasmic reticulum membrane. It catalyses the reaction a di-trans,poly-cis-dolichyl phosphate + GDP-alpha-D-mannose = a di-trans,poly-cis-dolichyl beta-D-mannosyl phosphate + GDP. It participates in protein modification; protein glycosylation. Its activity is regulated as follows. Inhibited by acetylsalicylic acid (aspirin). Transfers mannose from GDP-mannose to dolichol monophosphate to form dolichol phosphate mannose (Dol-P-Man) which is the mannosyl donor in pathways leading to N-glycosylation, glycosyl phosphatidylinositol membrane anchoring, and O-mannosylation of proteins. The protein is Dolichol-phosphate mannosyltransferase of Saccharomyces cerevisiae (strain ATCC 204508 / S288c) (Baker's yeast).